Here is a 465-residue protein sequence, read N- to C-terminus: Methylenetetrahydrofolate--tRNA-(uracil-5-)-methyltransferase TrmFO (465 aa).

Position 3 to 8 (3 to 8) interacts with FAD; that stretch reads GAGLAG.

The protein belongs to the MnmG family. TrmFO subfamily. Requires FAD as cofactor.

The protein resides in the cytoplasm. It carries out the reaction uridine(54) in tRNA + (6R)-5,10-methylene-5,6,7,8-tetrahydrofolate + NADH + H(+) = 5-methyluridine(54) in tRNA + (6S)-5,6,7,8-tetrahydrofolate + NAD(+). It catalyses the reaction uridine(54) in tRNA + (6R)-5,10-methylene-5,6,7,8-tetrahydrofolate + NADPH + H(+) = 5-methyluridine(54) in tRNA + (6S)-5,6,7,8-tetrahydrofolate + NADP(+). Catalyzes the folate-dependent formation of 5-methyl-uridine at position 54 (M-5-U54) in all tRNAs. The sequence is that of Methylenetetrahydrofolate--tRNA-(uracil-5-)-methyltransferase TrmFO from Bradyrhizobium sp. (strain ORS 278).